An 86-amino-acid polypeptide reads, in one-letter code: MKVSVVITLAVLGVMFVWASAAELKERGSDQRDSPAWIKSMERIFQSEERECTKFLGGCSEDSECCPHLGCKDVLYYCAWDGTFGK.

The first 21 residues, 1–21 (MKVSVVITLAVLGVMFVWASA), serve as a signal peptide directing secretion. Positions 22–50 (AELKERGSDQRDSPAWIKSMERIFQSEER) are excised as a propeptide. 3 disulfide bridges follow: cysteine 52–cysteine 66, cysteine 59–cysteine 71, and cysteine 65–cysteine 78. Phenylalanine 84 carries the post-translational modification Phenylalanine amide.

It belongs to the neurotoxin 10 (Hwtx-1) family. 37 (Jztx-31) subfamily. In terms of tissue distribution, expressed by the venom gland.

Its subcellular location is the secreted. Functionally, inhibits both peak current and fast inactivation of voltage-gated sodium channels (Nav) channels. Inhibits the inactivation of Nav on DRG neurons (EC(50)=1.77 uM) and peak current of cardiac myocytes (IC(50)=0.90 uM). The sequence is that of Mu-theraphotoxin-Cg2a 3 from Chilobrachys guangxiensis (Chinese earth tiger tarantula).